The following is a 631-amino-acid chain: Dolichyl-diphosphooligosaccharide--protein glycosyltransferase subunit 2 (631 aa).

The first 22 residues, 1–22 (MAPPGSSAVFLLALTITASVQA), serve as a signal peptide directing secretion. The Lumenal portion of the chain corresponds to 23–540 (LTPTHYLTKQ…REPEKRPPTV (518 aa)). N106 carries N-linked (GlcNAc...) asparagine glycosylation. Residue K154 forms a Glycyl lysine isopeptide (Lys-Gly) (interchain with G-Cter in ubiquitin) linkage. The chain crosses the membrane as a helical span at residues 541-561 (VSNTFTALILSPLLLLFALWI). Topologically, residues 562 to 571 (RIGANVSNFT) are cytoplasmic. The helical transmembrane segment at 572 to 592 (FAPSTVIFHLGHAAMLGLMYI) threads the bilayer. At 593–596 (YWTQ) the chain is on the lumenal side. The chain crosses the membrane as a helical span at residues 597-617 (LNMFQTLKYLAVLGTVTFLAG). Residues 618 to 631 (NRMLAQHAVKRTAH) lie on the Cytoplasmic side of the membrane.

It belongs to the SWP1 family. Component of the oligosaccharyltransferase (OST) complex. OST exists in two different complex forms which contain common core subunits RPN1, RPN2, OST48, OST4, DAD1 and TMEM258, either STT3A or STT3B as catalytic subunits, and form-specific accessory subunits. STT3A complex assembly occurs through the formation of 3 subcomplexes. Subcomplex 1 contains RPN1 and TMEM258, subcomplex 2 contains the STT3A-specific subunits STT3A, DC2/OSTC, and KCP2 as well as the core subunit OST4, and subcomplex 3 contains RPN2, DAD1, and OST48. The STT3A complex can form stable complexes with the Sec61 complex or with both the Sec61 and TRAP complexes. Interacts with DDI2. Interacts with TMEM35A/NACHO.

It localises to the endoplasmic reticulum. It is found in the endoplasmic reticulum membrane. Its pathway is protein modification; protein glycosylation. Its function is as follows. Subunit of the oligosaccharyl transferase (OST) complex that catalyzes the initial transfer of a defined glycan (Glc(3)Man(9)GlcNAc(2) in eukaryotes) from the lipid carrier dolichol-pyrophosphate to an asparagine residue within an Asn-X-Ser/Thr consensus motif in nascent polypeptide chains, the first step in protein N-glycosylation. N-glycosylation occurs cotranslationally and the complex associates with the Sec61 complex at the channel-forming translocon complex that mediates protein translocation across the endoplasmic reticulum (ER). All subunits are required for a maximal enzyme activity. This Mus musculus (Mouse) protein is Dolichyl-diphosphooligosaccharide--protein glycosyltransferase subunit 2.